The sequence spans 523 residues: 3-hydroxybenzoate--CoA ligase (523 aa).

Belongs to the ATP-dependent AMP-binding enzyme family. Benzoate-CoA ligase subfamily.

It catalyses the reaction 3-hydroxybenzoate + ATP + CoA = 3-hydroxybenzoyl-CoA + AMP + diphosphate. It carries out the reaction 4-hydroxybenzoate + ATP + CoA = 4-hydroxybenzoyl-CoA + AMP + diphosphate. Functionally, ligase involved in the anaerobic degradation of 3-hydroxybenzoate (3OHBz). Catalyzes the activation of 3-hydroxybenzoate to 3-hydroxybenzoyl-CoA. Also shows high activity with protocatechuate and 4-hydroxybenzoate. Exhibits lower activity with benzoate, but cannot use 2-hydroxybenzoate or benzoate analogs containing other substituents at the ortho position, such as 2-aminobenzoate (anthranilate). This Aromatoleum sp. (strain CIB) (Azoarcus sp. (strain CIB)) protein is 3-hydroxybenzoate--CoA ligase.